Reading from the N-terminus, the 598-residue chain is Jacalin-related lectin 17 (598 aa).

A disordered region spans residues 1 to 23; sequence MAQRLEAEGNKNFKGKSKWDDGS. Jacalin-type lectin domains are found at residues 2 to 148, 151 to 293, 295 to 445, and 452 to 595; these read AQRL…YVTW, PTKL…YFTT, PFTK…HFCP, and GEKV…HVLP.

The protein belongs to the jacalin lectin family.

The protein is Jacalin-related lectin 17 (JAL17) of Arabidopsis thaliana (Mouse-ear cress).